A 23-amino-acid polypeptide reads, in one-letter code: Phallacidin proprotein (23 aa).

A propeptide is located at residue Pro-1. Positions 2 to 8 (AWLVDCP) form a cross-link, cyclopeptide (Ala-Pro). The 2'-cysteinyl-6'-hydroxytryptophan sulfoxide (Trp-Cys) cross-link spans 3 to 7 (WLVDC). A propeptide spanning residues 9-23 (CVGDDISRLLTRGEK) is cleaved from the precursor.

Belongs to the MSDIN fungal toxin family. Post-translationally, processed by the macrocyclase-peptidase enzyme POPB to yield a toxic cyclic heptapeptide. POPB first removes 10 residues from the N-terminus. Conformational trapping of the remaining peptide forces the enzyme to release this intermediate rather than proceed to macrocyclization. The enzyme rebinds the remaining peptide in a different conformation and catalyzes macrocyclization of the N-terminal 7 residues.

Its function is as follows. Major toxin that belongs to the bicyclic heptapeptides called phallotoxins. Although structurally related to amatoxins, phallotoxins have a different mode of action, which is the stabilization of F-actin. Phallotoxins are poisonous when administered parenterally, but not orally because of poor absorption. This chain is Phallacidin proprotein, found in Amanita rimosa.